Reading from the N-terminus, the 177-residue chain is Peptide deformylase (177 aa).

Fe cation-binding residues include cysteine 98 and histidine 140. Glutamate 141 is an active-site residue. Histidine 144 contacts Fe cation.

It belongs to the polypeptide deformylase family. Requires Fe(2+) as cofactor.

It carries out the reaction N-terminal N-formyl-L-methionyl-[peptide] + H2O = N-terminal L-methionyl-[peptide] + formate. Removes the formyl group from the N-terminal Met of newly synthesized proteins. Requires at least a dipeptide for an efficient rate of reaction. N-terminal L-methionine is a prerequisite for activity but the enzyme has broad specificity at other positions. The polypeptide is Peptide deformylase (Zymomonas mobilis subsp. mobilis (strain ATCC 31821 / ZM4 / CP4)).